The following is a 174-amino-acid chain: UPF0336 protein MAP_3996c (174 aa).

Residues 11-131 form the MaoC-like domain; that stretch reads IGSHYRAPDY…VLAEIRSEVT (121 aa).

It belongs to the UPF0336 family.

This chain is UPF0336 protein MAP_3996c, found in Mycolicibacterium paratuberculosis (strain ATCC BAA-968 / K-10) (Mycobacterium paratuberculosis).